The following is a 363-amino-acid chain: Chorismate synthase (363 aa).

Arg48 and Arg54 together coordinate NADP(+). Residues 131-133 (RSS), 244-245 (NA), Gly288, 303-307 (KPTSS), and Arg329 contribute to the FMN site.

The protein belongs to the chorismate synthase family. In terms of assembly, homotetramer. The cofactor is FMNH2.

The enzyme catalyses 5-O-(1-carboxyvinyl)-3-phosphoshikimate = chorismate + phosphate. It participates in metabolic intermediate biosynthesis; chorismate biosynthesis; chorismate from D-erythrose 4-phosphate and phosphoenolpyruvate: step 7/7. Functionally, catalyzes the anti-1,4-elimination of the C-3 phosphate and the C-6 proR hydrogen from 5-enolpyruvylshikimate-3-phosphate (EPSP) to yield chorismate, which is the branch point compound that serves as the starting substrate for the three terminal pathways of aromatic amino acid biosynthesis. This reaction introduces a second double bond into the aromatic ring system. This chain is Chorismate synthase, found in Maricaulis maris (strain MCS10) (Caulobacter maris).